Here is a 202-residue protein sequence, read N- to C-terminus: MLRRTSFNFTGRAMISRGSPEWSHRLDLKKGKKTTMMHKLGTSKPNNALQYAQMTLHDLTEWCLAYSPWPLTFGLACCAVEMMHAYASRYDLDRFGIVPRPTPRQAEIIIVSGTVTNKMAPILRNIYVQMVNPKWVISMGSCANGGGYYHFSYAVLRGCERAIPVDFWIPGCPPSAESLVFCLHTLQKKIRWHEIQKYSVRD.

A mitochondrion-targeting transit peptide spans 1-56 (MLRRTSFNFTGRAMISRGSPEWSHRLDLKKGKKTTMMHKLGTSKPNNALQYAQMTL). Residues cysteine 77, cysteine 78, cysteine 142, and cysteine 172 each contribute to the [4Fe-4S] cluster site.

Belongs to the complex I 20 kDa subunit family. As to quaternary structure, complex I is composed of 45 different subunits This is a component of the iron-sulfur (IP) fragment of the enzyme. The cofactor is [4Fe-4S] cluster.

Its subcellular location is the mitochondrion. It carries out the reaction a ubiquinone + NADH + 5 H(+)(in) = a ubiquinol + NAD(+) + 4 H(+)(out). In terms of biological role, core subunit of the mitochondrial membrane respiratory chain NADH dehydrogenase (Complex I) that is believed to belong to the minimal assembly required for catalysis. Complex I functions in the transfer of electrons from NADH to the respiratory chain. The immediate electron acceptor for the enzyme is believed to be ubiquinone. The chain is NADH dehydrogenase [ubiquinone] iron-sulfur protein 7, mitochondrial (NDHK) from Trypanosoma brucei brucei.